We begin with the raw amino-acid sequence, 129 residues long: Fluoride-specific ion channel FluC 2 (129 aa).

Helical transmembrane passes span 4–24, 39–59, 65–85, and 104–124; these read LDVMWVCLGGGVGSLGRWWIG, TFLINISGAFVIGYLSVLFGV, YGTMLNAGVLTGILGGYTTFS, and VFYLVASVLSGLFAAWLGAML. Na(+)-binding residues include Gly79 and Thr82.

The protein belongs to the fluoride channel Fluc/FEX (TC 1.A.43) family.

It is found in the cell inner membrane. It catalyses the reaction fluoride(in) = fluoride(out). Its activity is regulated as follows. Na(+) is not transported, but it plays an essential structural role and its presence is essential for fluoride channel function. In terms of biological role, fluoride-specific ion channel. Important for reducing fluoride concentration in the cell, thus reducing its toxicity. This chain is Fluoride-specific ion channel FluC 2, found in Brucella abortus biovar 1 (strain 9-941).